The following is a 247-amino-acid chain: 5-oxoprolinase subunit A (247 aa).

It belongs to the LamB/PxpA family. In terms of assembly, forms a complex composed of PxpA, PxpB and PxpC.

It catalyses the reaction 5-oxo-L-proline + ATP + 2 H2O = L-glutamate + ADP + phosphate + H(+). Its function is as follows. Catalyzes the cleavage of 5-oxoproline to form L-glutamate coupled to the hydrolysis of ATP to ADP and inorganic phosphate. The chain is 5-oxoprolinase subunit A from Vibrio vulnificus (strain YJ016).